The sequence spans 247 residues: MTQLVLIRHGESTWNLENRFTGWTDVELTPTGVAQAQQAGRLLKQAGIDFDTVYTSVLKRAIWTAWHCLDGMDRTWLPVIKDWRLNERHYGGLQGLNKADMAKQFGDEQVLLWRRSYDVPPPPLEANDPRSERSDVRYAKLAANQVPLTECLKDTVARVLPLWYGTLAPAIAAGQRLVIVAHGNSIRALVKHLNNISDADIVGVNIPNGIPLVYDLDANLKPTSKYYLGGADAAAQAASVSALQADG.

Substrate-binding positions include 8 to 15 (RHGESTWN), 21 to 22 (TG), Arg-60, 87 to 90 (ERHY), Lys-98, 114 to 115 (RR), and 183 to 184 (GN). Residue His-9 is the Tele-phosphohistidine intermediate of the active site. The active-site Proton donor/acceptor is the Glu-87.

This sequence belongs to the phosphoglycerate mutase family. BPG-dependent PGAM subfamily. As to quaternary structure, homodimer.

It carries out the reaction (2R)-2-phosphoglycerate = (2R)-3-phosphoglycerate. The protein operates within carbohydrate degradation; glycolysis; pyruvate from D-glyceraldehyde 3-phosphate: step 3/5. Its function is as follows. Catalyzes the interconversion of 2-phosphoglycerate and 3-phosphoglycerate. The sequence is that of 2,3-bisphosphoglycerate-dependent phosphoglycerate mutase from Methylibium petroleiphilum (strain ATCC BAA-1232 / LMG 22953 / PM1).